Consider the following 132-residue polypeptide: Tyrosine phosphatase-like protein N2 (132 aa).

A Tyrosine-protein phosphatase domain is found at 1-132; it reads MQGPMKNTVA…DILGRFQRVF (132 aa).

The protein belongs to the protein-tyrosine phosphatase family.

The protein is Tyrosine phosphatase-like protein N2 (N4) of Microplitis demolitor (Parasitoid wasp).